The following is a 311-amino-acid chain: Acetyl-coenzyme A carboxylase carboxyl transferase subunit alpha (311 aa).

The CoA carboxyltransferase C-terminal domain occupies 36–286 (KLEKEVEKTF…KEYFIKSLAE (251 aa)).

The protein belongs to the AccA family. In terms of assembly, acetyl-CoA carboxylase is a heterohexamer composed of biotin carboxyl carrier protein (AccB), biotin carboxylase (AccC) and two subunits each of ACCase subunit alpha (AccA) and ACCase subunit beta (AccD).

The protein resides in the cytoplasm. The enzyme catalyses N(6)-carboxybiotinyl-L-lysyl-[protein] + acetyl-CoA = N(6)-biotinyl-L-lysyl-[protein] + malonyl-CoA. Its pathway is lipid metabolism; malonyl-CoA biosynthesis; malonyl-CoA from acetyl-CoA: step 1/1. Functionally, component of the acetyl coenzyme A carboxylase (ACC) complex. First, biotin carboxylase catalyzes the carboxylation of biotin on its carrier protein (BCCP) and then the CO(2) group is transferred by the carboxyltransferase to acetyl-CoA to form malonyl-CoA. This chain is Acetyl-coenzyme A carboxylase carboxyl transferase subunit alpha, found in Aliarcobacter butzleri (strain RM4018) (Arcobacter butzleri).